The chain runs to 350 residues: TATA box-binding protein-like 2 (350 aa).

Positions 82-150 (ENRDQTVTGN…QPSPETPNSN (69 aa)) are disordered. The segment covering 94-116 (ASEESCRTRDRQSQLQLPDEHGS) has biased composition (basic and acidic residues). Composition is skewed to polar residues over residues 118 to 128 (LNLNSNSSPDP) and 139 to 150 (SNQPSPETPNSN).

The protein belongs to the TBP family. As to quaternary structure, interacts with TAF3. Expressed in myotubes and myofibers (at protein level). Expressed in a wide variety of tissues with highest levels in heart, lung, liver, uterus and placenta and especially the gonads. Expression is higher in the ovary than the testis, and within the ovary expression is localized to the oocytes.

Its subcellular location is the cytoplasm. The protein resides in the nucleus. Functionally, transcription factor required in complex with TAF3 for the differentiation of myoblasts into myocytes. The complex replaces TFIID at specific promoters at an early stage in the differentiation process. This chain is TATA box-binding protein-like 2, found in Mus musculus (Mouse).